Consider the following 230-residue polypeptide: Flagellar L-ring protein (230 aa).

Residues 1 to 18 (MNRLNIAVSCLATALLFG) form the signal peptide. The N-palmitoyl cysteine moiety is linked to residue Cys19. The S-diacylglycerol cysteine moiety is linked to residue Cys19.

Belongs to the FlgH family. In terms of assembly, the basal body constitutes a major portion of the flagellar organelle and consists of four rings (L,P,S, and M) mounted on a central rod.

It is found in the cell outer membrane. It localises to the bacterial flagellum basal body. Its function is as follows. Assembles around the rod to form the L-ring and probably protects the motor/basal body from shearing forces during rotation. This Legionella pneumophila (strain Corby) protein is Flagellar L-ring protein.